The following is a 350-amino-acid chain: Ribosomal RNA small subunit methyltransferase C (350 aa).

It belongs to the methyltransferase superfamily. RsmC family. Monomer.

The protein localises to the cytoplasm. It catalyses the reaction guanosine(1207) in 16S rRNA + S-adenosyl-L-methionine = N(2)-methylguanosine(1207) in 16S rRNA + S-adenosyl-L-homocysteine + H(+). Specifically methylates the guanine in position 1207 of 16S rRNA in the 30S particle. The protein is Ribosomal RNA small subunit methyltransferase C of Sodalis glossinidius (strain morsitans).